A 283-amino-acid polypeptide reads, in one-letter code: Release factor glutamine methyltransferase (283 aa).

S-adenosyl-L-methionine-binding residues include aspartate 143 and asparagine 189. Residue 189–192 (NPPY) participates in substrate binding.

The protein belongs to the protein N5-glutamine methyltransferase family. PrmC subfamily.

It carries out the reaction L-glutaminyl-[peptide chain release factor] + S-adenosyl-L-methionine = N(5)-methyl-L-glutaminyl-[peptide chain release factor] + S-adenosyl-L-homocysteine + H(+). In terms of biological role, methylates the class 1 translation termination release factors RF1/PrfA and RF2/PrfB on the glutamine residue of the universally conserved GGQ motif. This chain is Release factor glutamine methyltransferase, found in Clostridium botulinum (strain Hall / ATCC 3502 / NCTC 13319 / Type A).